The sequence spans 192 residues: uncharacterized protein (192 aa).

Residues C53–C111 adopt a coiled-coil conformation.

This is an uncharacterized protein from Aquifex aeolicus (strain VF5).